The sequence spans 823 residues: Molybdenum cofactor sulfurase (823 aa).

N6-(pyridoxal phosphate)lysine is present on K228. C392 is a catalytic residue. The segment at S628–P667 is disordered. Residues S644–S819 enclose the MOSC domain.

This sequence belongs to the class-V pyridoxal-phosphate-dependent aminotransferase family. MOCOS subfamily. The cofactor is pyridoxal 5'-phosphate.

It carries out the reaction Mo-molybdopterin + L-cysteine + AH2 = thio-Mo-molybdopterin + L-alanine + A + H2O. It participates in cofactor biosynthesis; molybdopterin biosynthesis. In terms of biological role, sulfurates the molybdenum cofactor. Sulfation of molybdenum is essential for xanthine dehydrogenase (XDH) and aldehyde oxidase (ADO) enzymes in which molybdenum cofactor is liganded by 1 oxygen and 1 sulfur atom in active form. This chain is Molybdenum cofactor sulfurase, found in Aspergillus niger (strain ATCC MYA-4892 / CBS 513.88 / FGSC A1513).